We begin with the raw amino-acid sequence, 257 residues long: AT-hook motif nuclear-localized protein 16 (257 aa).

Positions 1 to 71 are disordered; it reads MAGGTALTPT…SKNKPKPPII (71 aa). Positions 53–65 form a DNA-binding region, a.T hook; that stretch reads KRPRGRPAGSKNK. The PPC domain occupies 77–214; the sequence is PNSLRANAVE…DEAASMQNQQ (138 aa).

Interacts with FVE/MSI4 and MSI5 which are components of HDAC corepressor complexes. Preferentially expressed in the inflorescence meristem and young floral buds, as well as in seedling-stage vegetative meristems. Widely expressed in flowers, roots and stems, with relatively low expression in leaves.

The protein localises to the nucleus. Transcription factor that specifically binds AT-rich DNA sequences related to the nuclear matrix attachment regions (MARs). Encodes a nuclear matrix protein that acts in the maintenance of genomic integrity by silencing TEs and repeat-containing genes through epigenetic machinery. Acts as a chromatin remodeling factor that modifies the architecture of FLC and FWA chromatin by modulating both H3 acetylation and methylation leading to the regulation of FLC and FWA expression. Negatively regulates floral repressors including MAF4 and MAF5. Plays a transcription activation role in anther development. Regulates the expression of arabinogalactan proteins (AGPs) involved in the formation of the nexine layer of the pollen wall. Binds AGP6, AGP11, AGP23 and AGP40 promoters. This is AT-hook motif nuclear-localized protein 16 from Arabidopsis thaliana (Mouse-ear cress).